A 526-amino-acid chain; its full sequence is Importin subunit alpha-1a (526 aa).

The IBB domain maps to 1–58 (MSLRPSERVEVRRNRYKVAVDAEEGRRRREDNMVEIRKSRREESLLKKRREGLQAQAP). 8 ARM repeats span residues 105–145 (SPPI…NIAS), 148–187 (SENT…NVAG), 190–230 (PKCR…NFCR), 232–271 (KPQP…YLSD), 274–313 (NDKI…NIVT), 316–356 (DAQT…NITA), 359–398 (KDQI…NATS), and 402–441 (HDQI…NILK).

Belongs to the importin alpha family. Forms a complex with importin subunit beta-1. The whole complex, most stable and composed of importin alpha, importin beta and NLS substrate, is referred to as PTAC or pore targeting complex. Interacts with mungbean yellow mosaic virus capsid protein. In terms of tissue distribution, highly expressed in callus, followed by root and etiolated leaf. Low expression in green leaf.

Its subcellular location is the cytoplasm. The protein resides in the perinuclear region. Functionally, functions in nuclear protein import. Binds specifically and directly to substrates containing either a simple or bipartite NLS motif. Promotes docking of import substrates to the nuclear envelope. The polypeptide is Importin subunit alpha-1a (Oryza sativa subsp. japonica (Rice)).